Reading from the N-terminus, the 210-residue chain is MENSVENSMDPRSEQEEMQRCADQITDESLESTRRMLQLVEESKDAGIRTLVMLDEQGEQLERIEEGMDQINKDMKEAEKNLSDLGKCCGLCSCPCNKLKNFEAGGAYKKVWGNNQDGVVASQPARVMDDREQMAMSGGYIRRITDDARENEMEENLDQVGSIIGNLRHMALDMSNEIGSQNAQIDRIVVKGDMNKARIDEANKHATKML.

Positions 1–23 (MENSVENSMDPRSEQEEMQRCAD) are disordered. A compositionally biased stretch (basic and acidic residues) spans 9-20 (MDPRSEQEEMQR). T-SNARE coiled-coil homology domains lie at 23-85 (DQIT…LSDL) and 147-209 (DARE…ATKM).

It belongs to the SNAP-25 family.

It is found in the synapse. Its subcellular location is the synaptosome. It localises to the cell membrane. Functionally, may play an important role in the synaptic function of specific neuronal systems. Associates with proteins involved in vesicle docking and membrane fusion. In Torpedo marmorata (Marbled electric ray), this protein is Synaptosomal-associated protein 25 (snap25).